Reading from the N-terminus, the 185-residue chain is Ribosome-recycling factor (185 aa).

Belongs to the RRF family.

It is found in the cytoplasm. Responsible for the release of ribosomes from messenger RNA at the termination of protein biosynthesis. May increase the efficiency of translation by recycling ribosomes from one round of translation to another. The sequence is that of Ribosome-recycling factor from Francisella tularensis subsp. tularensis (strain FSC 198).